Reading from the N-terminus, the 255-residue chain is ATP synthase subunit a 2 (255 aa).

Transmembrane regions (helical) follow at residues 26–46 (SINIDSMIMVWMVGLLFIGVF), 86–106 (LIGPLALTIFVWVFLMNSIDL), 131–151 (DVNVPVSMALGVFILIIGYTL), 205–225 (MIFILIALMPWWMQWALSVPW), and 230–250 (ILIVFLQAFIFMVLTIVYLAM).

The protein belongs to the ATPase A chain family. As to quaternary structure, F-type ATPases have 2 components, CF(1) - the catalytic core - and CF(0) - the membrane proton channel. CF(1) has five subunits: alpha(3), beta(3), gamma(1), delta(1), epsilon(1). CF(0) has three main subunits: a(1), b(2) and c(9-12). The alpha and beta chains form an alternating ring which encloses part of the gamma chain. CF(1) is attached to CF(0) by a central stalk formed by the gamma and epsilon chains, while a peripheral stalk is formed by the delta and b chains.

The protein localises to the cell inner membrane. Key component of the proton channel; it plays a direct role in the translocation of protons across the membrane. In Photobacterium profundum (strain SS9), this protein is ATP synthase subunit a 2.